We begin with the raw amino-acid sequence, 266 residues long: Type III pantothenate kinase (266 aa).

9–16 (DAGNSRIK) contacts ATP. Residues Y96 and 103–106 (GSDR) contribute to the substrate site. Residue D105 is the Proton acceptor of the active site. T129 lines the ATP pocket. T189 lines the substrate pocket.

Belongs to the type III pantothenate kinase family. Homodimer. Requires NH4(+) as cofactor. K(+) serves as cofactor.

The protein localises to the cytoplasm. The enzyme catalyses (R)-pantothenate + ATP = (R)-4'-phosphopantothenate + ADP + H(+). Its pathway is cofactor biosynthesis; coenzyme A biosynthesis; CoA from (R)-pantothenate: step 1/5. Functionally, catalyzes the phosphorylation of pantothenate (Pan), the first step in CoA biosynthesis. In Burkholderia lata (strain ATCC 17760 / DSM 23089 / LMG 22485 / NCIMB 9086 / R18194 / 383), this protein is Type III pantothenate kinase.